Here is a 111-residue protein sequence, read N- to C-terminus: Universal stress protein B (111 aa).

A run of 2 helical transmembrane segments spans residues 1–21 and 90–110; these read MIST…NMAR and FILT…LMIW.

The protein belongs to the universal stress protein B family.

Its subcellular location is the cell inner membrane. The sequence is that of Universal stress protein B from Cronobacter sakazakii (strain ATCC BAA-894) (Enterobacter sakazakii).